A 241-amino-acid chain; its full sequence is Meiotically up-regulated gene 130 protein (241 aa).

It localises to the mitochondrion. Its function is as follows. Has a role in meiosis. This chain is Meiotically up-regulated gene 130 protein (mug130), found in Schizosaccharomyces pombe (strain 972 / ATCC 24843) (Fission yeast).